The sequence spans 379 residues: Hydrogenase expression/formation protein HupD (379 aa).

Fe cation is bound by residues C36, C64, and C67.

The protein belongs to the HypD family.

The chain is Hydrogenase expression/formation protein HupD (hupD) from Azotobacter chroococcum mcd 1.